Reading from the N-terminus, the 91-residue chain is Acyl-CoA-binding domain-containing protein 2 (91 aa).

In terms of domain architecture, ACB spans 3 to 88 (LQEEFEEFAE…VKQLLEEASA (86 aa)). An acyl-CoA contacts are provided by residues Lys-15, 30 to 34 (YGLYK), Lys-52, Lys-56, and Tyr-75.

Belongs to the ACBP family. Highly expressed in leaves. Expressed at low levels in roots and seeds.

It is found in the cytoplasm. The protein localises to the cytosol. In terms of biological role, binds medium- and long-chain acyl-CoA esters with high affinity. Can interact in vitro with linolenoyl-CoA. Binds palmitoyl-CoA and linoleoyl-CoA in vitro. Binds phosphatidic acid (PA) and phosphatidylcholine (PC) in vitro. May play a role in the biosynthesis of phospholipids. This is Acyl-CoA-binding domain-containing protein 2 from Oryza sativa subsp. japonica (Rice).